Here is a 266-residue protein sequence, read N- to C-terminus: Bidirectional sugar transporter SWEET7b (266 aa).

The Extracellular segment spans residues 1–9 (MVSPDLIRN). Residues 10-30 (MVGIVGNIISFGLFLSPVPTF) form a helical membrane-spanning segment. The 88-residue stretch at 10 to 97 (MVGIVGNIIS…TIFFLFSDKK (88 aa)) folds into the MtN3/slv 1 domain. Topologically, residues 31–45 (YRIIKNKDVQDFKAD) are cytoplasmic. Residues 46-66 (PYLATLLNCMLWVFYGLPIVH) traverse the membrane as a helical segment. Topologically, residues 67–69 (PNS) are extracellular. Residues 70 to 90 (ILVVTINGIGLIIEAVYLTIF) form a helical membrane-spanning segment. Over 91-101 (FLFSDKKNKKK) the chain is Cytoplasmic. A helical membrane pass occupies residues 102–122 (MGVVLATEALFMAAVVLGVLL). The Extracellular portion of the chain corresponds to 123–131 (GAHTHQRRS). Residues 132–152 (LIVGILCAIFGTIMYSSPLTI) traverse the membrane as a helical segment. The 84-residue stretch at 133–216 (IVGILCAIFG…LILYAIYYRT (84 aa)) folds into the MtN3/slv 2 domain. The Cytoplasmic portion of the chain corresponds to 153–165 (MSQVVKTKSVEYM). Residues 166–186 (PLLLSVVSFLNGLCWTSYALI) form a helical membrane-spanning segment. Over 187–189 (RLD) the chain is Extracellular. The helical transmembrane segment at 190-210 (IFITIPNGLGVLFALMQLILY) threads the bilayer. Residues 211 to 266 (AIYYRTTPKKQDKNLELPTVAPVAKDTSIVTPVSKDDDVVDGGNASHVTINITIEP) lie on the Cytoplasmic side of the membrane.

This sequence belongs to the SWEET sugar transporter family. As to quaternary structure, forms homooligomers and/or heterooligomers.

The protein resides in the cell membrane. Functionally, mediates both low-affinity uptake and efflux of sugar across the plasma membrane. The sequence is that of Bidirectional sugar transporter SWEET7b (SWEET7B) from Oryza sativa subsp. indica (Rice).